The following is a 448-amino-acid chain: Metacaspase-1 (448 aa).

Residues 1 to 129 are disordered; that stretch reads MFPGQGRHTY…GHYSRPPTDS (129 aa). The span at 10-44 shows a compositional bias: low complexity; that stretch reads YGGQQSNYSNQQQGYDQGYNQGYGQAYGQEYNQGY. The segment covering 61-70 has biased composition (pro residues); that stretch reads SGPPPGPPPG. Residues 99–114 are compositionally biased toward polar residues; the sequence is YGNNQTRGSGNEQNYG. Active-site residues include His-231 and Cys-292.

Belongs to the peptidase C14B family.

Its function is as follows. Involved in cell death (apoptosis). This Candida albicans (strain SC5314 / ATCC MYA-2876) (Yeast) protein is Metacaspase-1 (MCA1).